Consider the following 118-residue polypeptide: Large ribosomal subunit protein bL20c (118 aa).

Belongs to the bacterial ribosomal protein bL20 family.

Its subcellular location is the plastid. Functionally, binds directly to 23S ribosomal RNA and is necessary for the in vitro assembly process of the 50S ribosomal subunit. It is not involved in the protein synthesizing functions of that subunit. This Aneura mirabilis (Parasitic liverwort) protein is Large ribosomal subunit protein bL20c.